The primary structure comprises 172 residues: MTERQSSFSYNDLIDSSNGKMWGPDNAQLPAPPMLMMDRITHIDDETGEHGKGQIVAELDIKPDLWFFDCHFKGDPVMPGCLGLDAMWQLVGFFLCWKGNPGKGRALGVGEVKFTGQITPDCKKVRYVIDLKRVIQRRLIMAIGDGRVEVDGKTIYTAKDLRVGLFKPGEMA.

H71 is an active-site residue.

It belongs to the thioester dehydratase family. FabA subfamily. As to quaternary structure, homodimer.

It is found in the cytoplasm. The enzyme catalyses a (3R)-hydroxyacyl-[ACP] = a (2E)-enoyl-[ACP] + H2O. The catalysed reaction is (3R)-hydroxydecanoyl-[ACP] = (2E)-decenoyl-[ACP] + H2O. It carries out the reaction (2E)-decenoyl-[ACP] = (3Z)-decenoyl-[ACP]. It functions in the pathway lipid metabolism; fatty acid biosynthesis. Its function is as follows. Necessary for the introduction of cis unsaturation into fatty acids. Catalyzes the dehydration of (3R)-3-hydroxydecanoyl-ACP to E-(2)-decenoyl-ACP and then its isomerization to Z-(3)-decenoyl-ACP. Can catalyze the dehydratase reaction for beta-hydroxyacyl-ACPs with saturated chain lengths up to 16:0, being most active on intermediate chain length. The protein is 3-hydroxydecanoyl-[acyl-carrier-protein] dehydratase of Maricaulis maris (strain MCS10) (Caulobacter maris).